Reading from the N-terminus, the 969-residue chain is Leucine--tRNA ligase (969 aa).

The 'HIGH' region motif lies at 45 to 55; the sequence is PYTNAPLHIGH. The 'KMSKS' region motif lies at 649 to 653; it reads KMSKS. Lysine 652 is an ATP binding site.

It belongs to the class-I aminoacyl-tRNA synthetase family.

The protein resides in the cytoplasm. It carries out the reaction tRNA(Leu) + L-leucine + ATP = L-leucyl-tRNA(Leu) + AMP + diphosphate. The polypeptide is Leucine--tRNA ligase (Staphylothermus marinus (strain ATCC 43588 / DSM 3639 / JCM 9404 / F1)).